A 468-amino-acid chain; its full sequence is Phosphatidylinositol-binding clathrin assembly protein LAP (468 aa).

The 143-residue stretch at 16 to 158 folds into the ENTH domain; the sequence is RHSLAGQGLA…LSYRAMAFDF (143 aa). A disordered region spans residues 438 to 468; it reads NAGDGTAKYDGGAGSSPFDWGATDDDGGAAQ. The span at 459–468 shows a compositional bias: acidic residues; the sequence is ATDDDGGAAQ.

It belongs to the PICALM/SNAP91 family. As to quaternary structure, binds clathrin and phosphatidylinositol 4,5-bisphosphate. In embryos, expression is seen in central and peripheral nervous systems (brain and ventral nerve cord) and Garland cells. Coexpressed with clathrin at presynaptic boutons of neuromuscular junctions.

The protein localises to the membrane. Its subcellular location is the clathrin-coated pit. It is found in the golgi apparatus. The protein resides in the cytoplasmic vesicle. It localises to the clathrin-coated vesicle. Assembly protein recruiting clathrin and adaptor protein complex 2 (AP2) to cell membranes at sites of coated-pit formation and clathrin-vesicle assembly. May be required to determine the amount of membrane to be recycled, possibly by regulating the size of the clathrin cage. Involved in AP2-dependent clathrin-mediated endocytosis at the neuromuscular junction. This is Phosphatidylinositol-binding clathrin assembly protein LAP (lap) from Drosophila melanogaster (Fruit fly).